The primary structure comprises 83 residues: Small ribosomal subunit protein eS21 (83 aa).

Belongs to the eukaryotic ribosomal protein eS21 family. In terms of assembly, component of the 40S small ribosomal subunit.

The protein localises to the cytoplasm. It is found in the cytosol. Its subcellular location is the rough endoplasmic reticulum. This Spodoptera frugiperda (Fall armyworm) protein is Small ribosomal subunit protein eS21 (RpS21).